Consider the following 395-residue polypeptide: Teichoic acid D-alanyltransferase (395 aa).

Residues 1–6 are Extracellular-facing; it reads MTPYSS. Residues 7 to 26 traverse the membrane as a helical segment; it reads FLFFILLGILLLPTIILGLN. The Cytoplasmic portion of the chain corresponds to 27–30; it reads GKRF. The chain crosses the membrane as a helical span at residues 31–46; sequence QAYNMFISIIILALIF. The Extracellular portion of the chain corresponds to 47 to 50; that stretch reads SHDL. The chain crosses the membrane as a helical span at residues 51-76; sequence HGVIALCLFTIWQVLLISGYLAYRQK. Over 77–79 the chain is Cytoplasmic; that stretch reads ANS. A helical membrane pass occupies residues 80-104; that stretch reads GFVFCGAVIASILPLFLSKIWPFLS. Residues 105–120 are Extracellular-facing; sequence HPQPHHPPHNLISFLG. Residues 121–137 traverse the membrane as a helical segment; it reads ISYLTFKGVQLIMEARD. Residues 138–145 lie on the Cytoplasmic side of the membrane; sequence GLLKEQLP. Residues 146–175 lie within the membrane without spanning it; the sequence is LHRLLYFILFFPTISSGPIDRYRRFVKDEQ. At 176–179 the chain is on the cytoplasmic side; that stretch reads KAWT. Residues 180-223 form a helical membrane-spanning segment; the sequence is KEEYADLLYTGIHKIFIGFLYKFIIGYAINTYFIMNLPAITHNK. A topological domain (extracellular) is located at residue Ile-224. The helical transmembrane segment at 225-256 threads the bilayer; the sequence is LGNLLYMYGYSMYLFFDFAGYTMFAVGVSYIM. Topologically, residues 257-266 are cytoplasmic; it reads GIKSPENFNK. Residues 267–303 lie within the membrane without spanning it; sequence PFISKNIKDFWNRWHMSLSFWFRDYVFMRFVFWMTKK. Residues 304 to 308 lie on the Cytoplasmic side of the membrane; it reads KWIKN. A helical transmembrane segment spans residues 309–328; it reads RMAVSNIGYFLLFMLMGVWH. His-328 is a catalytic residue. Residues 329 to 333 lie on the Extracellular side of the membrane; the sequence is GLAPQ. Residues 334-351 form a helical membrane-spanning segment; it reads YIIYGLYHAVLMTCYNFF. The Cytoplasmic portion of the chain corresponds to 352-364; sequence EKWNKKYKWLPSN. The helical transmembrane segment at 365-387 threads the bilayer; that stretch reads RWTTILAIVITFHFVCFGFYIFS. The Extracellular segment spans residues 388 to 395; sequence GKPFHHHH.

It belongs to the membrane-bound acyltransferase family.

It is found in the cell membrane. It participates in cell wall biogenesis; lipoteichoic acid biosynthesis. In terms of biological role, O-acyltransferase that catalyzes D-alanylation of both teichoic acid and lipoteichoic acid (LTA). D-alanylation of LTA plays an important role in modulating the properties of the cell wall in Gram-positive bacteria, influencing the net charge of the cell wall. Catalyzes D-alanylation from DltC carrier protein. The chain is Teichoic acid D-alanyltransferase from Bacillus subtilis (strain 168).